The chain runs to 85 residues: Putative membrane protein insertion efficiency factor (85 aa).

This sequence belongs to the UPF0161 family.

It localises to the cell inner membrane. Functionally, could be involved in insertion of integral membrane proteins into the membrane. The protein is Putative membrane protein insertion efficiency factor of Enterobacter sp. (strain 638).